The sequence spans 473 residues: Phosphatidylserine synthase 1 (473 aa).

The residue at position 2 (A2) is an N-acetylalanine. The Cytoplasmic segment spans residues 2 to 35; sequence ASCVGSRTLSKDDVNYKMHFRMINEQQVEDITID. A helical membrane pass occupies residues 36-56; it reads FFYRPHTITLLSFTIVSLMYF. The Lumenal portion of the chain corresponds to 57–72; sequence AFTRDDSVPEDNIWRG. A helical membrane pass occupies residues 73–93; that stretch reads ILSVIFFFLIISVLAFPNGPF. Over 94–102 the chain is Cytoplasmic; the sequence is TRPHPALWR. The helical transmembrane segment at 103–123 threads the bilayer; it reads MVFGLSVLYFLFLVFLLFLNF. Residues 124–186 are Lumenal-facing; sequence EQVKSLMYWL…AMKALLIRSY (63 aa). Residues 187-207 form a helical membrane-spanning segment; it reads GLCWTISITWELTELFFMHLL. The Cytoplasmic portion of the chain corresponds to 208–216; that stretch reads PNFAECWWD. Residues 217-237 form a helical membrane-spanning segment; it reads QVILDILLCNGGGIWLGMVVC. The Lumenal portion of the chain corresponds to 238–286; it reads RFLEMRTYHWASFKDIHTTTGKIKRAVLQFTPASWTYVRWFDPKSSFQR. The helical transmembrane segment at 287–307 threads the bilayer; it reads VAGIYLFMIIWQLTELNTFFL. The Cytoplasmic portion of the chain corresponds to 308–319; the sequence is KHIFVFQASHPL. The chain crosses the membrane as a helical span at residues 320 to 342; it reads SWCRILFIGGITAPTVRQYYAYL. Residues 343 to 355 lie on the Lumenal side of the membrane; that stretch reads TDTQCKRVGTQCW. The chain crosses the membrane as a helical span at residues 356–376; it reads VFGVIGFLEAIVCIKFGQDLF. At 377 to 383 the chain is on the cytoplasmic side; sequence SKTQILY. Residues 384-404 form a helical membrane-spanning segment; it reads VVLWLLCVAFTTFLCLYGMVW. The Lumenal segment spans residues 405–473; sequence YAEHYGHREK…SKVTNGVGKK (69 aa). Phosphoserine is present on residues S417, S425, and S454. The segment at 427–473 is disordered; the sequence is DISWPHGKGSKGSEDGPHKHPGNSESHSSRRRNRHSKSKVTNGVGKK. Positions 455–464 are enriched in basic residues; that stretch reads SRRRNRHSKS.

The protein belongs to the phosphatidyl serine synthase family.

Its subcellular location is the endoplasmic reticulum membrane. It catalyses the reaction a 1,2-diacyl-sn-glycero-3-phosphoethanolamine + L-serine = a 1,2-diacyl-sn-glycero-3-phospho-L-serine + ethanolamine. The catalysed reaction is a 1,2-diacyl-sn-glycero-3-phosphocholine + L-serine = a 1,2-diacyl-sn-glycero-3-phospho-L-serine + choline. Its pathway is phospholipid metabolism; phosphatidylserine biosynthesis. Catalyzes a base-exchange reaction in which the polar head group of phosphatidylethanolamine (PE) or phosphatidylcholine (PC) is replaced by L-serine. Catalyzes mainly the conversion of phosphatidylcholine but also converts, in vitro and to a lesser extent, phosphatidylethanolamine. The sequence is that of Phosphatidylserine synthase 1 (PTDSS1) from Bos taurus (Bovine).